A 131-amino-acid polypeptide reads, in one-letter code: Large ribosomal subunit protein bL17 (131 aa).

It belongs to the bacterial ribosomal protein bL17 family. As to quaternary structure, part of the 50S ribosomal subunit. Contacts protein L32.

The polypeptide is Large ribosomal subunit protein bL17 (Shewanella sp. (strain ANA-3)).